The sequence spans 1707 residues: Kinesin-like protein KIF1A (1707 aa).

The Kinesin motor domain maps to 5–354 (SVKVAVRVRP…LRYADRAKQI (350 aa)). 5 residues coordinate ATP: G102, K103, S104, Y105, and S215. A Mg(2+)-binding site is contributed by S104. A coiled-coil region spans residues 439-466 (SEEAIERLKETEKIIAELNETWEEKLRR). The 57-residue stretch at 525 to 581 (TRVGREDAERRQDIVLSGHFIKEEHCIFRSDSRGGGEAVVTLEPCEGADTYVNGKKV) folds into the FHA domain. Coiled-coil stretches lie at residues 637–671 (EKQG…LLEQ) and 811–831 (LEKL…AAEV). Residues 657–1105 (QYRREREEAT…LCKDVLSPLR (449 aa)) are required for interaction with CALM1, PPFIA2 and TANC2. Disordered stretches follow at residues 1424-1462 (PVPE…EVPN) and 1536-1576 (TDVR…EKEP). The segment covering 1429–1453 (LSPASSEDSESRSSSGASSPLSAEG) has biased composition (low complexity). A PH domain is found at 1592 to 1690 (IVSKKGYLHF…WLYAFNPLLA (99 aa)).

This sequence belongs to the TRAFAC class myosin-kinesin ATPase superfamily. Kinesin family. Unc-104 subfamily. In terms of assembly, dimeric motor; dimerization is required for ATP-driven processive motility. Monomer in vitro. Interacts with PPFIA1 and PPFIA4. Interacts with CALM1; the interaction is increased in presence of calcium and increases neuronal dense core vesicles motility. Interacts with PPFIA2 and TANC2; both interactions allow the recruitment of neuronal dense core vesicles to dendritic spines and decrease in presence of calcium. Interacts with SYT4 (unphosphorylated) and SYT11; both interactions increase in presence of calcium. Interacts with MADD.

Its subcellular location is the cytoplasm. It is found in the cytoskeleton. It localises to the cell projection. The protein resides in the neuron projection. The protein localises to the axon. Its subcellular location is the perinuclear region. It is found in the synapse. It localises to the cytoplasmic vesicle. The protein resides in the secretory vesicle. The protein localises to the neuronal dense core vesicle membrane. The enzyme catalyses ATP + H2O + a kinesin associated with a microtubule at position (n) = ADP + phosphate a kinesin associated with a microtubule at position (n+1, toward the plus end).. Kinesin motor with a plus-end-directed microtubule motor activity, involved in anterograde axonal transport of synaptic vesicle precursors. Also required for neuronal dense core vesicles (DCVs) transport to the dendritic spines and axons. The interaction calcium-dependent with CALM1 increases vesicle motility and interaction with the scaffolding proteins PPFIA2 and TANC2 recruits DCVs to synaptic sites. This Rattus norvegicus (Rat) protein is Kinesin-like protein KIF1A.